Here is a 690-residue protein sequence, read N- to C-terminus: MTTDSSDPAKPAGPGQPPGSGADTRPGGLATGQDVDPATIETDEDDEARLPDVPDEPTDAIAEGPLAVGRAAIEHAVRHAPTSPGVYRMMNAARDVLYVGKAKNVRKRLSSYARPTGQVMRIARMIAATSTIEIVSTETETEALLLEANLIKQLRPRFNVQLRDDKSFPYILITGDHWAPQILKHRGAQSRPGRYFGPFASAGAVGRTITALQRAFLVRSCTDSFFEGRTRPCLLYQIKRCAGPCTGEIDFPGYTALVREATDFLSGRSRAVKEELAREMEKASGDLAFERAALYRDRLAALSAIQSQQGINPRTVEEADVFAIHQEGGYSCVEVFFFRTGQNWGNRAYFPRAEKSFTPEEVLGAFLAQFYDDKPPPKVILLSHRIEESELLADALSIKAGHKVGVLMPQRGEKKELVAHALTNAREALGRKLADTATQSRLLQGLATVLGLPHAPRRIEVYDNSHIQGTNAVGAMIVAGPEGLLKNQYRKFNIRSENLTPGDDYAMMREVLERRFKRLLTQKAADPDKADEPEKDAVPQWPDLVIIDGGLGQLNAVRGIFDALGLSQVSLMAVAKGPDRDAGRETLFLPDRPAIKLEPRDPVLYFIQRLRDEAHRFVIGSHRKLRRKDIREAGLQEVPGIGPARKRALLHHFGTLKEIERASVADLGKVPGISAESARKIFDFFHTRPG.

Residues 1–60 (MTTDSSDPAKPAGPGQPPGSGADTRPGGLATGQDVDPATIETDEDDEARLPDVPDEPTDA) form a disordered region. Over residues 41–58 (ETDEDDEARLPDVPDEPT) the composition is skewed to acidic residues. A GIY-YIG domain is found at 82 to 160 (TSPGVYRMMN…IKQLRPRFNV (79 aa)). One can recognise a UVR domain in the interval 270-305 (RAVKEELAREMEKASGDLAFERAALYRDRLAALSAI).

The protein belongs to the UvrC family. In terms of assembly, interacts with UvrB in an incision complex.

The protein localises to the cytoplasm. Its function is as follows. The UvrABC repair system catalyzes the recognition and processing of DNA lesions. UvrC both incises the 5' and 3' sides of the lesion. The N-terminal half is responsible for the 3' incision and the C-terminal half is responsible for the 5' incision. The protein is UvrABC system protein C of Nitrobacter hamburgensis (strain DSM 10229 / NCIMB 13809 / X14).